Reading from the N-terminus, the 325-residue chain is MIIVTGGAGFIGSNIVQGLNDRGITDILVVDDLRDGRKCLNLADADIRDYMDMDDFLARIQTGEDLGRVEAVFHEGACSSTTEWDGRFVMRVNYEYTKALLAWCTQRKIPLIYASSASVYGMGPTFREAREFEQPLNMYAYSKFLFDCHLRAQQGIESQVVGLRYFNVYGPREQHKGSMASVAYHFNNQLNESGRVRLFEGSDGYGPGEQRRDFIHVDDVVAVNLWLFDNPQVSGIYNLGTGRAQSFNDVARAAIKWFRAQGEDGGRERGGIDYIPFPDHLKGRYQSFTEADMGALRAAGYDRPFMDVETGVPAYLSWLASQDKR.

NADP(+) is bound by residues 10–11 (FI), 31–32 (DD), Lys38, and 75–79 (EGACS). The active-site Proton acceptor is the Tyr139. Lys143 serves as a coordination point for NADP(+). Asn167 contacts substrate. NADP(+) contacts are provided by Val168 and Lys176. Lys176 serves as the catalytic Proton acceptor. Residues Ser178, His185, 199–202 (FEGS), Arg212, and Tyr285 each bind substrate.

The protein belongs to the NAD(P)-dependent epimerase/dehydratase family. HldD subfamily. Homopentamer. The cofactor is NADP(+).

The enzyme catalyses ADP-D-glycero-beta-D-manno-heptose = ADP-L-glycero-beta-D-manno-heptose. The protein operates within nucleotide-sugar biosynthesis; ADP-L-glycero-beta-D-manno-heptose biosynthesis; ADP-L-glycero-beta-D-manno-heptose from D-glycero-beta-D-manno-heptose 7-phosphate: step 4/4. Functionally, catalyzes the interconversion between ADP-D-glycero-beta-D-manno-heptose and ADP-L-glycero-beta-D-manno-heptose via an epimerization at carbon 6 of the heptose. This Azoarcus sp. (strain BH72) protein is ADP-L-glycero-D-manno-heptose-6-epimerase.